The primary structure comprises 323 residues: tRNA U34 carboxymethyltransferase (323 aa).

Residues lysine 91, tryptophan 105, lysine 110, glycine 130, 152 to 154, 181 to 182, methionine 196, tyrosine 200, and arginine 315 contribute to the carboxy-S-adenosyl-L-methionine site; these read DPT and IE.

Belongs to the class I-like SAM-binding methyltransferase superfamily. CmoB family. As to quaternary structure, homotetramer.

It carries out the reaction carboxy-S-adenosyl-L-methionine + 5-hydroxyuridine(34) in tRNA = 5-carboxymethoxyuridine(34) in tRNA + S-adenosyl-L-homocysteine + H(+). Functionally, catalyzes carboxymethyl transfer from carboxy-S-adenosyl-L-methionine (Cx-SAM) to 5-hydroxyuridine (ho5U) to form 5-carboxymethoxyuridine (cmo5U) at position 34 in tRNAs. This chain is tRNA U34 carboxymethyltransferase, found in Escherichia coli (strain K12 / MC4100 / BW2952).